The chain runs to 574 residues: Interleukin-1 receptor-like 2 (574 aa).

The first 21 residues, 1–21 (MGVTSLLFCGVFFLLLLFVAA), serve as a signal peptide directing secretion. Topologically, residues 22–338 (DTCEDIFMHN…ILIYPVPDFR (317 aa)) are extracellular. 3 Ig-like C2-type domains span residues 25–113 (EDIF…VNLT), 132–215 (PDVY…IRNY), and 225–321 (YGRR…TCHA). N-linked (GlcNAc...) asparagine glycosylation is found at Asn-43, Asn-55, and Asn-111. A disulfide bond links Cys-44 and Cys-97. Cys-149 and Cys-199 form a disulfide bridge. N-linked (GlcNAc...) asparagine glycosylation is found at Asn-231, Asn-237, Asn-253, Asn-269, Asn-290, and Asn-302. Cys-252 and Cys-319 are disulfide-bonded. A helical transmembrane segment spans residues 339–359 (AYLLGGLMAFLLLVVSVLFIY). Residues 360 to 574 (NSFKIDIMLW…CNAATGLITP (215 aa)) are Cytoplasmic-facing. One can recognise a TIR domain in the interval 384-539 (KLYDAYVLYP…KFWKKVRYHM (156 aa)). Residue Glu-470 is part of the active site.

It belongs to the interleukin-1 receptor family. Interacts with IL1RAP; the association is enhanced by IL36B indicative for an functional signaling complex and inhibited by IL36RN. Expressed in bone marrow-derived dendritic cells, splenic CD4(+) T-cells, bone marrow-derived macrophages and bone marrow-derived neutrophils.

The protein localises to the membrane. It carries out the reaction NAD(+) + H2O = ADP-D-ribose + nicotinamide + H(+). Its function is as follows. Receptor for interleukin-36 (IL36A, IL36B and IL36G). After binding to interleukin-36 associates with the coreceptor IL1RAP to form the interleukin-36 receptor complex which mediates interleukin-36-dependent activation of NF-kappa-B, MAPK and other pathways. The IL-36 signaling system is thought to be present in epithelial barriers and to take part in local inflammatory response; it is similar to the IL-1 system. Seems to be involved in skin inflammatory response by induction of the IL-23/IL-17/IL-22 pathway. The chain is Interleukin-1 receptor-like 2 (Il1rl2) from Mus musculus (Mouse).